A 279-amino-acid chain; its full sequence is UTP--glucose-1-phosphate uridylyltransferase (279 aa).

Belongs to the UDPGP type 2 family.

It catalyses the reaction alpha-D-glucose 1-phosphate + UTP + H(+) = UDP-alpha-D-glucose + diphosphate. May play a role in stationary phase survival. The polypeptide is UTP--glucose-1-phosphate uridylyltransferase (galU) (Pseudomonas aeruginosa (strain ATCC 15692 / DSM 22644 / CIP 104116 / JCM 14847 / LMG 12228 / 1C / PRS 101 / PAO1)).